Reading from the N-terminus, the 646-residue chain is MKLHKKKLTLFAFFILTVLTVTLKTYFSYYVDFSLGVKGLVQNLILLMNPYSLIALVLSIFLFFKGKKAFWFIFIGGFILTFLLYANVVYFRFFSDFLTFSTLNQAGNVESMGGAVTASFKWYDFVYFIDTIIYLFVLIFKQKWLDKRVFSKKFVPVVMAASIALFFLNLAFAESDRPELLTRTFDHKYLVKYLGPYNFTVYDGVKTIQNNQQKALANEDDLTKVLNYTKQKQTEPNKEYFGAAKKKNIIKIHLESFQTFLINKKVNGEEVTPFLNKLSTGNEGYRYYPNFYHQTGQGKTSDSEFTMDNSLFGLPQGSAYSLKGDNTYQSLPAILDQQQGYTSSVMHGDYKTFWNRDQVYKHFGIDKFYDATYYDMSEDNIENLGLKDKEFFKESADYLAKEKQPFYNHLITLTNHYPFTVSPEDASIEKPNTGDSTVDGYIQTARYLDESLEEFVNELKKKGLYDDSVIMIYGDHYGISENHNKAMEKLLGEDITPAKFNDLNRTGFWLKIPGKEGTVDKTYAGQADVMPTILHLMGIDTKNYLMMGTDLLSKDHNDTVPFRNGDFVTKDYKYVNGRIYDNKNNEPMTEKPKDFEKRKQQSEKDLQMSDDVLNGDLLRFYDNPDFDKIKPSEYEYKTGPKGQERK.

At 1–7 the chain is on the cytoplasmic side; that stretch reads MKLHKKK. The chain crosses the membrane as a helical span at residues 8 to 28; the sequence is LTLFAFFILTVLTVTLKTYFS. The Extracellular segment spans residues 29 to 43; it reads YYVDFSLGVKGLVQN. A helical membrane pass occupies residues 44-64; that stretch reads LILLMNPYSLIALVLSIFLFF. Residues 65–68 are Cytoplasmic-facing; sequence KGKK. Residues 69-89 traverse the membrane as a helical segment; the sequence is AFWFIFIGGFILTFLLYANVV. Residues 90-119 lie on the Extracellular side of the membrane; it reads YFRFFSDFLTFSTLNQAGNVESMGGAVTAS. The helical transmembrane segment at 120 to 140 threads the bilayer; it reads FKWYDFVYFIDTIIYLFVLIF. At 141–153 the chain is on the cytoplasmic side; that stretch reads KQKWLDKRVFSKK. A helical transmembrane segment spans residues 154-174; the sequence is FVPVVMAASIALFFLNLAFAE. The Extracellular portion of the chain corresponds to 175 to 646; sequence SDRPELLTRT…KTGPKGQERK (472 aa). 2 residues coordinate Mn(2+): E255 and T300. T300 is an active-site residue. H416 serves as a coordination point for substrate. 2 residues coordinate Mn(2+): D475 and H476. The interval 579–646 is disordered; sequence IYDNKNNEPM…KTGPKGQERK (68 aa). Composition is skewed to basic and acidic residues over residues 580-607 and 625-646; these read YDNKNNEPMTEKPKDFEKRKQQSEKDLQ and DFDKIKPSEYEYKTGPKGQERK.

The protein belongs to the LTA synthase family. Post-translationally, proteolytically cleaved.

It localises to the cell membrane. The protein resides in the secreted. It participates in cell wall biogenesis; lipoteichoic acid biosynthesis. In terms of biological role, catalyzes the polymerization of lipoteichoic acid (LTA) polyglycerol phosphate, a reaction that presumably uses phosphatidylglycerol (PG) as substrate. Is required for staphylococcal growth and cell division process. This Staphylococcus saprophyticus subsp. saprophyticus (strain ATCC 15305 / DSM 20229 / NCIMB 8711 / NCTC 7292 / S-41) protein is Lipoteichoic acid synthase (ltaS).